We begin with the raw amino-acid sequence, 104 residues long: MSAKIIAFSAVVATASAFAPTAGFVPRLRSGATSVNMAMDKSAKAPVITIFDHRGCSRAPKEYTGAKAGGKDDEMMVKAQSVKIEVSTGTAEGVLATSLAKMTK.

A chloroplast-targeting transit peptide spans 1–37 (MSAKIIAFSAVVATASAFAPTAGFVPRLRSGATSVNM). Lysine 41 is modified (5-hydroxylysine). 2 residues coordinate 15,16-dihydrobiliverdin: cysteine 56 and arginine 58. Residues 61 to 63 (KEY) form a 15,16-dihydrobiliverdin chromophore region. Lysine 78 is a 15,16-dihydrobiliverdin binding site.

Belongs to the phycoerythrin family. Heterotetramer of 2 different alpha chains and 2 identical beta chains. The subunit composition could comprise of any combination of 2 out of 4 different alpha units with an invariant beta unit. In terms of processing, contains one covalently linked 15,16-dihydrobiliverdin chromophore.

The protein resides in the plastid. It is found in the chloroplast thylakoid membrane. Light-harvesting photosynthetic tetrapyrrole chromophore-protein from the phycobiliprotein complex. The sequence is that of Phycoerythrin alpha-2 chain, chloroplastic (cpeA2) from Rhodomonas sp. (strain CS 24) (Chroomonas sp. (strain CS24)).